The sequence spans 635 residues: Biosynthetic arginine decarboxylase (635 aa).

At Lys-103 the chain carries N6-(pyridoxal phosphate)lysine. 283 to 293 (FDVGGGLGVDY) contributes to the substrate binding site.

This sequence belongs to the Orn/Lys/Arg decarboxylase class-II family. SpeA subfamily. Mg(2+) serves as cofactor. Pyridoxal 5'-phosphate is required as a cofactor.

The catalysed reaction is L-arginine + H(+) = agmatine + CO2. It functions in the pathway amine and polyamine biosynthesis; agmatine biosynthesis; agmatine from L-arginine: step 1/1. Catalyzes the biosynthesis of agmatine from arginine. In Proteus mirabilis (strain HI4320), this protein is Biosynthetic arginine decarboxylase.